Reading from the N-terminus, the 654-residue chain is DNA-directed RNA polymerase III subunit RPC3 (654 aa).

The residue at position 27 (Thr-27) is a Phosphothreonine. Disordered regions lie at residues 381-401 (LSRK…ASLP) and 422-448 (KSLQ…EDPH). Ser-392 and Ser-394 each carry phosphoserine. The span at 429–444 (DTQEEDEEEEDLDADT) shows a compositional bias: acidic residues. The interval 581–602 (LEWNMANLLFKKEKLKQENSTL) is leucine-zipper.

This sequence belongs to the eukaryotic RPC3/POLR3C RNA polymerase subunit family. In terms of assembly, component of the RNA polymerase III (Pol III) complex consisting of 17 subunits.

It is found in the cytoplasm. The protein resides in the nucleus. In terms of biological role, DNA-dependent RNA polymerase catalyzes the transcription of DNA into RNA using the four ribonucleoside triphosphates as substrates. Specific core component of RNA polymerase III which synthesizes small RNAs, such as 5S rRNA and tRNAs. This is DNA-directed RNA polymerase III subunit RPC3 (RPC82) from Saccharomyces cerevisiae (strain ATCC 204508 / S288c) (Baker's yeast).